Reading from the N-terminus, the 232-residue chain is (S)-2-haloacid dehalogenase (232 aa).

The active-site Nucleophile is the Asp10. An (S)-2-haloacid is bound by residues 11–12 (LY), Arg41, and 118–119 (SN). Positions 175-180 (SSNAWD) are important for catalytic activity.

Belongs to the HAD-like hydrolase superfamily. S-2-haloalkanoic acid dehalogenase family. As to quaternary structure, homodimer.

The catalysed reaction is an (S)-2-haloacid + H2O = a (2R)-2-hydroxycarboxylate + a halide anion + H(+). It catalyses the reaction (S)-2-chloropropanoate + H2O = (R)-lactate + chloride + H(+). In terms of biological role, catalyzes the hydrolytic dehalogenation of small (S)-2-haloalkanoic acids to yield the corresponding (R)-2-hydroxyalkanoic acids. Acts on acids of short chain lengths, C(2) to C(4), with inversion of configuration at C-2. Active with 2-halogenated carboxylic acids and converts only the S-isomer (or L-isomer) of 2-chloropropionic acid with inversion of configuration to produce R-lactate (or D-isomer). The protein is (S)-2-haloacid dehalogenase of Pseudomonas sp. (strain YL).